Here is a 541-residue protein sequence, read N- to C-terminus: Atlastin-3 (541 aa).

The segment at 1-25 (MLSPQRVAAAASRGADDAMESSKPG) is N-terminal hypervariable region (HVR). Over 1–445 (MLSPQRVAAA…NVFSTFRTPA (445 aa)) the chain is Cytoplasmic. A GB1/RHD3-type G domain is found at 57–305 (DLDVVVVSVA…LIPYVLNPSK (249 aa)). The GDP site is built by Arg-70, Lys-71, Gly-72, Lys-73, Ser-74, Phe-75, and Arg-109. Asp-142 lines the Mg(2+) pocket. Residues Arg-213, Asp-214, Val-272, and Ser-275 each coordinate GDP. Residues 343–434 (MLQATAEANN…YENFCKHNGS (92 aa)) are 3HB (three-helix bundle) domain. Lys-391 bears the N6-acetyllysine mark. Residues 446–466 (VLFTGIVALYIASGLTGFIGL) form a helical membrane-spanning segment. Position 467 (Glu-467) is a topological domain, lumenal. The chain crosses the membrane as a helical span at residues 468-488 (VVAQLFNCMVGLLLIALLTWG). At 489–541 (YIRYSGQYRELGGAIDFGAAYVLEQASSHIGNSTQATVRDAVVGRPSMDKKAQ) the chain is on the cytoplasmic side. Ser-535 is subject to Phosphoserine.

This sequence belongs to the TRAFAC class dynamin-like GTPase superfamily. GB1/RHD3 GTPase family. GB1 subfamily. In terms of assembly, monomeric and homodimeric. The homodimer, transiently formed by two molecules on opposing membranes, is the active form mediating ER membrane fusion. Interacts with ZFYVE27; both proteins are involved in endoplasmic reticulum tubular network organization. Interacts with REEP5; both proteins are involved in endoplasmic reticulum tubular network organization. As to expression, expressed in the central nervous system and in dorsal root ganglia neurons. Expressed in peripheral tissues (at protein level).

Its subcellular location is the endoplasmic reticulum membrane. The enzyme catalyses GTP + H2O = GDP + phosphate + H(+). Functionally, atlastin-3 (ATL3) is a membrane-anchored GTPase that mediates the GTP-dependent fusion of endoplasmic reticulum (ER) membranes, maintaining the continuous ER network. It facilitates the formation of three-way junctions where ER tubules intersect. Two atlastin-3 on neighboring ER tubules bind GTP and form loose homodimers through the GB1/RHD3-type G domains and 3HB regions. Upon GTP hydrolysis, the 3HB regions tighten, pulling the membranes together to drive their fusion. After fusion, the homodimer disassembles upon release of inorganic phosphate (Pi). Subsequently, GDP dissociates, resetting the monomers to a conformation ready for a new fusion cycle. This chain is Atlastin-3, found in Homo sapiens (Human).